Reading from the N-terminus, the 76-residue chain is Omega-conotoxin-like TxO2 (76 aa).

A signal peptide spans methionine 1 to alanine 22. Positions alanine 23 to arginine 52 are excised as a propeptide. 3 disulfides stabilise this stretch: cysteine 53-cysteine 67, cysteine 60-cysteine 71, and cysteine 66-cysteine 75.

The protein belongs to the conotoxin O1 superfamily. In terms of tissue distribution, expressed by the venom duct.

The protein resides in the secreted. Omega-conotoxins act at presynaptic membranes, they bind and block voltage-gated calcium channels (Cav). In Conus textile (Cloth-of-gold cone), this protein is Omega-conotoxin-like TxO2.